The sequence spans 277 residues: Putative endonuclease (277 aa).

Functionally, putative endonuclease. The sequence is that of Putative endonuclease from Escherichia coli (Enterobacteria phage T5).